The sequence spans 134 residues: uncharacterized protein (134 aa).

The first 37 residues, 1 to 37, serve as a signal peptide directing secretion; that stretch reads MSYIKRDHTALRDIAMKTFLKVVGLAASLSAASVAFS.

This is an uncharacterized protein from Coxiella burnetii (strain RSA 493 / Nine Mile phase I).